Here is a 144-residue protein sequence, read N- to C-terminus: Transcription antitermination protein NusB (144 aa).

It belongs to the NusB family.

Its function is as follows. Involved in transcription antitermination. Required for transcription of ribosomal RNA (rRNA) genes. Binds specifically to the boxA antiterminator sequence of the ribosomal RNA (rrn) operons. This Paraburkholderia xenovorans (strain LB400) protein is Transcription antitermination protein NusB.